Reading from the N-terminus, the 885-residue chain is Cytosolic carboxypeptidase-like protein 5 (885 aa).

Residues 150 to 576 enclose the Peptidase M14 domain; the sequence is YPFSYAECQD…AVAVAALDMA (427 aa). 2 residues coordinate Zn(2+): His-247 and Glu-250. 2 disordered regions span residues 341-364 and 392-428; these read SGSALKTSNQSNTSPPVATPTERE and ESWEKSGVQREAEHSDENESAQSRGETNSAPSEQVPP. Positions 344-356 are enriched in polar residues; it reads ALKTSNQSNTSPP. The segment covering 393–408 has biased composition (basic and acidic residues); that stretch reads SWEKSGVQREAEHSDE. The segment covering 411–428 has biased composition (polar residues); that stretch reads SAQSRGETNSAPSEQVPP. His-440 is a binding site for Zn(2+). The Proton donor/acceptor role is filled by Glu-522. Positions 606 to 668 are enriched in polar residues; that stretch reads STGLTSNNRR…KSSPSFTFGT (63 aa). Disordered stretches follow at residues 606 to 788 and 866 to 885; these read STGL…RTAL and ALLKNSSRQTDQHIHRSLPT. Basic and acidic residues predominate over residues 682–691; that stretch reads RECKAQEKRR. Positions 712–749 are enriched in low complexity; sequence LSAPVRAPLSPSSSSSSSSSSPSSSSSAPGPGSISLAG.

This sequence belongs to the peptidase M14 family. Requires Zn(2+) as cofactor.

It localises to the cytoplasm. The protein localises to the cytosol. Its subcellular location is the nucleus. The protein resides in the cytoskeleton. It is found in the spindle. It localises to the midbody. It catalyses the reaction gamma-L-glutamyl-L-glutamyl-[protein] + H2O = L-glutamyl-[protein] + L-glutamate. The enzyme catalyses (L-glutamyl)(n+1)-gamma-L-glutamyl-L-glutamyl-[protein] + H2O = (L-glutamyl)(n)-gamma-L-glutamyl-L-glutamyl-[protein] + L-glutamate. It carries out the reaction C-terminal L-alpha-aminoacyl-L-glutamyl-[tubulin] + H2O = C-terminal L-alpha-aminoacyl-[tubulin] + L-glutamate. The catalysed reaction is C-terminal L-alpha-aminoacyl-L-glutamyl-L-glutamyl-[tubulin] + H2O = C-terminal L-alpha-aminoacyl-L-glutamyl-[tubulin] + L-glutamate. Functionally, metallocarboxypeptidase that mediates deglutamylation of tubulin and non-tubulin target proteins. Catalyzes the removal of polyglutamate side chains present on the gamma-carboxyl group of glutamate residues within the C-terminal tail of alpha- and beta-tubulin. Cleaves alpha- and gamma-linked polyglutamate tubulin side-chain, as well as the branching point glutamate. Also catalyzes the removal of alpha-linked glutamate residues from the carboxy-terminus of alpha-tubulin. This is Cytosolic carboxypeptidase-like protein 5 (agbl5) from Danio rerio (Zebrafish).